The sequence spans 418 residues: Putative ion-transport protein YfeO (418 aa).

Transmembrane regions (helical) follow at residues 10–30 (LLLSLPAVAIGITSSLILIMV), 54–74 (DSPLWIIGVLTLTGIAVGLVI), 99–119 (ALPGLIVALILGLAGGVSLGP), 120–140 (EHPIITVNIALAVAIGARLLP), 149–169 (ILASAGTIGALFGTTVAAALI), 186–206 (LFAPLMAAAAGALTTGLFFHP), 223–243 (ILSGAIVAAIAIAAGMVAVWC), 258–278 (VFVLGIGGFILGILGVIGGPV), 300–320 (DYFLLAVIKLAALVVAAASGF), 322–342 (GGRIFPAVFVGVALGLMLHEH), 343–363 (VPAVPAAITVSCAILGIVLVV), and 371–391 (LFMAAVVVPNTTLLPLLCIVM).

Belongs to the chloride channel (TC 2.A.49) family.

The protein resides in the cell membrane. This is Putative ion-transport protein YfeO from Escherichia coli O127:H6 (strain E2348/69 / EPEC).